Reading from the N-terminus, the 846-residue chain is Enhancer of polycomb-like protein 1 (846 aa).

Disordered stretches follow at residues 169–204, 391–466, 587–609, 682–702, and 759–804; these read FNSK…KGDA, TSDE…APDA, EKKR…PKAM, AADA…PQPN, and QVQA…GVKQ. Residues 180-203 are compositionally biased toward basic and acidic residues; that stretch reads VKSDKEQGRGMRVKGKDREKEKGD. A compositionally biased stretch (polar residues) spans 411–426; that stretch reads PSLSGQTPLTSGQSSS. Residues 432–452 show a composition bias toward basic and acidic residues; the sequence is TDKDREERAQRERYDAQRNAE. The stretch at 434 to 490 forms a coiled coil; the sequence is KDREERAQRERYDAQRNAERSGILSGRSNAPDALKERLQALQQKTEEMLARKKEQDA. Over residues 686–702 the composition is skewed to pro residues; it reads KPPPAPIFQKPPAPQPN. Over residues 759-773 the composition is skewed to low complexity; the sequence is QVQAQGQGHPQAHLQ. The span at 774–796 shows a compositional bias: polar residues; the sequence is THPQGVSQPNGVNSPMPNGQQML.

It belongs to the enhancer of polycomb family. In terms of assembly, component of the NuA4 histone acetyltransferase complex.

The protein localises to the nucleus. In terms of biological role, component of the NuA4 histone acetyltransferase complex which is involved in transcriptional activation of selected genes principally by acetylation of nucleosomal histone H4 and H2A. The NuA4 complex is also involved in DNA repair. Involved in gene silencing by neighboring heterochromatin, blockage of the silencing spreading along the chromosome, and required for cell cycle progression through G2/M. The polypeptide is Enhancer of polycomb-like protein 1 (EPL1) (Cryptococcus neoformans var. neoformans serotype D (strain B-3501A) (Filobasidiella neoformans)).